The chain runs to 1396 residues: DNA-directed RNA polymerase subunit beta' (1396 aa).

4 residues coordinate Zn(2+): C70, C72, C85, and C88. Positions 460, 462, and 464 each coordinate Mg(2+). The Zn(2+) site is built by C814, C889, C896, and C899.

It belongs to the RNA polymerase beta' chain family. As to quaternary structure, the RNAP catalytic core consists of 2 alpha, 1 beta, 1 beta' and 1 omega subunit. When a sigma factor is associated with the core the holoenzyme is formed, which can initiate transcription. It depends on Mg(2+) as a cofactor. The cofactor is Zn(2+).

It catalyses the reaction RNA(n) + a ribonucleoside 5'-triphosphate = RNA(n+1) + diphosphate. Its function is as follows. DNA-dependent RNA polymerase catalyzes the transcription of DNA into RNA using the four ribonucleoside triphosphates as substrates. The polypeptide is DNA-directed RNA polymerase subunit beta' (Hahella chejuensis (strain KCTC 2396)).